The sequence spans 306 residues: Agmatinase (306 aa).

Mn(2+) contacts are provided by H126, D149, H151, D153, D230, and D232.

Belongs to the arginase family. Agmatinase subfamily. Mn(2+) serves as cofactor.

It carries out the reaction agmatine + H2O = urea + putrescine. Its pathway is amine and polyamine biosynthesis; putrescine biosynthesis via agmatine pathway; putrescine from agmatine: step 1/1. Catalyzes the formation of putrescine from agmatine. The chain is Agmatinase from Klebsiella pneumoniae (strain 342).